The chain runs to 156 residues: Small ribosomal subunit protein uS7 (156 aa).

This sequence belongs to the universal ribosomal protein uS7 family. In terms of assembly, part of the 30S ribosomal subunit. Contacts proteins S9 and S11.

Its function is as follows. One of the primary rRNA binding proteins, it binds directly to 16S rRNA where it nucleates assembly of the head domain of the 30S subunit. Is located at the subunit interface close to the decoding center, probably blocks exit of the E-site tRNA. The polypeptide is Small ribosomal subunit protein uS7 (Clostridium botulinum (strain Okra / Type B1)).